Here is a 310-residue protein sequence, read N- to C-terminus: D-alanyl-D-alanine endopeptidase (310 aa).

Positions 1-23 (MRNRLLSLVTLFLSLSVATAVSA) are cleaved as a signal peptide. The active-site Acyl-ester intermediate is S66. Catalysis depends on K69, which acts as the Proton acceptor. S123 is a catalytic residue. K230 is a substrate binding site.

This sequence belongs to the peptidase S11 family.

It is found in the periplasm. Functionally, cell wall formation. The protein is D-alanyl-D-alanine endopeptidase (pbpG) of Pseudomonas aeruginosa (strain ATCC 15692 / DSM 22644 / CIP 104116 / JCM 14847 / LMG 12228 / 1C / PRS 101 / PAO1).